A 449-amino-acid polypeptide reads, in one-letter code: C4-dicarboxylate transport protein (449 aa).

Helical transmembrane passes span 18–38, 61–81, 93–113, 159–179, 202–222, 244–264, 311–331, and 369–389; these read PFYL…ALLG, MIIS…VAHV, VYFL…AHVV, FVGD…IALA, LVQM…AFTI, SLLF…FSIL, GYSF…LFIA, and AATL…ILGV.

Belongs to the dicarboxylate/amino acid:cation symporter (DAACS) (TC 2.A.23) family.

Its subcellular location is the cell inner membrane. Functionally, responsible for the transport of dicarboxylates such as succinate, fumarate, and malate from the periplasm across the membrane. This chain is C4-dicarboxylate transport protein, found in Xylella fastidiosa (strain M12).